A 104-amino-acid chain; its full sequence is ATP-dependent Clp protease adapter protein ClpS (104 aa).

It belongs to the ClpS family. In terms of assembly, binds to the N-terminal domain of the chaperone ClpA.

Functionally, involved in the modulation of the specificity of the ClpAP-mediated ATP-dependent protein degradation. The polypeptide is ATP-dependent Clp protease adapter protein ClpS (Paraburkholderia xenovorans (strain LB400)).